A 513-amino-acid polypeptide reads, in one-letter code: Sphingolipid C9-methyltransferase (513 aa).

The next 2 membrane-spanning stretches (helical) occupy residues 52-72 and 74-94; these read ILFS…GLGF and TWVF…WSIM. Residues 222 to 223, 259 to 267, 285 to 290, and 315 to 316 contribute to the S-adenosyl-L-methionine site; these read YT, VLDIGCGWG, TLGRNQ, and YR.

This sequence belongs to the CFA/CMAS family.

It is found in the membrane. The enzyme catalyses a (4E,8E)-4-sphinga-4,8-dienine ceramide + S-adenosyl-L-methionine = a 9-methyl-(4E,8E)-sphinga-4,8-dienine ceramide + S-adenosyl-L-homocysteine + H(+). It participates in lipid metabolism; sphingolipid metabolism. In terms of biological role, catalyzes methylation of the sphingoid base component of glucosylceramides (GluCers) at the C9-position. Sphingolipid C9-methylation requires 4,8-desaturated ceramides as substrates. Glucosylceramides play important roles in growth, differentiation and pathogenicity. The methyl group at the C9-position distinguishes fungal glucosylceramides from those of plants and animals, and may thus play a role in host-pathogen interactions enabling the host to recognize the fungal attack and initiate specific defense responses. Not necessary for vegetative growth at low temperatures, but plays a role in hyphal formation on solid medium. In Candida albicans (strain SC5314 / ATCC MYA-2876) (Yeast), this protein is Sphingolipid C9-methyltransferase.